The following is a 289-amino-acid chain: Phosphatidylserine decarboxylase proenzyme (289 aa).

Active-site charge relay system; for autoendoproteolytic cleavage activity residues include Asp-92, His-149, and Ser-254. Ser-254 functions as the Schiff-base intermediate with substrate; via pyruvic acid; for decarboxylase activity in the catalytic mechanism. A Pyruvic acid (Ser); by autocatalysis modification is found at Ser-254.

It belongs to the phosphatidylserine decarboxylase family. PSD-B subfamily. Prokaryotic type I sub-subfamily. Heterodimer of a large membrane-associated beta subunit and a small pyruvoyl-containing alpha subunit. It depends on pyruvate as a cofactor. In terms of processing, is synthesized initially as an inactive proenzyme. Formation of the active enzyme involves a self-maturation process in which the active site pyruvoyl group is generated from an internal serine residue via an autocatalytic post-translational modification. Two non-identical subunits are generated from the proenzyme in this reaction, and the pyruvate is formed at the N-terminus of the alpha chain, which is derived from the carboxyl end of the proenzyme. The autoendoproteolytic cleavage occurs by a canonical serine protease mechanism, in which the side chain hydroxyl group of the serine supplies its oxygen atom to form the C-terminus of the beta chain, while the remainder of the serine residue undergoes an oxidative deamination to produce ammonia and the pyruvoyl prosthetic group on the alpha chain. During this reaction, the Ser that is part of the protease active site of the proenzyme becomes the pyruvoyl prosthetic group, which constitutes an essential element of the active site of the mature decarboxylase.

It is found in the cell membrane. The catalysed reaction is a 1,2-diacyl-sn-glycero-3-phospho-L-serine + H(+) = a 1,2-diacyl-sn-glycero-3-phosphoethanolamine + CO2. It participates in phospholipid metabolism; phosphatidylethanolamine biosynthesis; phosphatidylethanolamine from CDP-diacylglycerol: step 2/2. Its function is as follows. Catalyzes the formation of phosphatidylethanolamine (PtdEtn) from phosphatidylserine (PtdSer). The sequence is that of Phosphatidylserine decarboxylase proenzyme from Pseudomonas aeruginosa (strain ATCC 15692 / DSM 22644 / CIP 104116 / JCM 14847 / LMG 12228 / 1C / PRS 101 / PAO1).